Here is a 426-residue protein sequence, read N- to C-terminus: Dihydroorotase (426 aa).

Zn(2+)-binding residues include His-62 and His-64. Residues 64 to 66 (HLR) and Asn-96 each bind substrate. The Zn(2+) site is built by Asp-154, His-181, and His-234. Substrate is bound at residue Asn-280. Asp-307 is a binding site for Zn(2+). Residue Asp-307 is part of the active site. Substrate is bound by residues His-311 and 325–326 (FG).

It belongs to the metallo-dependent hydrolases superfamily. DHOase family. Class I DHOase subfamily. Zn(2+) serves as cofactor.

The enzyme catalyses (S)-dihydroorotate + H2O = N-carbamoyl-L-aspartate + H(+). It functions in the pathway pyrimidine metabolism; UMP biosynthesis via de novo pathway; (S)-dihydroorotate from bicarbonate: step 3/3. Catalyzes the reversible cyclization of carbamoyl aspartate to dihydroorotate. In Desulforapulum autotrophicum (strain ATCC 43914 / DSM 3382 / VKM B-1955 / HRM2) (Desulfobacterium autotrophicum), this protein is Dihydroorotase.